We begin with the raw amino-acid sequence, 389 residues long: Probable zinc transporter zip2 (389 aa).

Helical transmembrane passes span 6 to 26 (GWIL…GIYL), 48 to 68 (LVTG…ASVM), 88 to 108 (VFQF…NHFL), 267 to 289 (VLVA…LYLA), 305 to 325 (SCSL…GGIG), 329 to 349 (FLNF…LILS), and 368 to 388 (HSFI…IFDS).

The protein belongs to the ZIP transporter (TC 2.A.5) family.

It is found in the endoplasmic reticulum membrane. Its function is as follows. Probable zinc transporter that may mediate zinc remobilization from the endoplasmic reticulum under zinc limitation. This chain is Probable zinc transporter zip2 (zip2), found in Schizosaccharomyces pombe (strain 972 / ATCC 24843) (Fission yeast).